We begin with the raw amino-acid sequence, 319 residues long: MQYKKEALLLMLFAVLLALTQRFSYSRTKDHLQKMYACWKDHLEEPHLSTWFDPKKRPDVIATTGWLAPVLWEGTYNREVLEQYYKRLNITIGLAVFATGNFSKEPLRRFIKSADKYFMVGYNVIFYILADSTYNLPYFELGPLRTLKTWRLFEEEMCQDCNLRNMNNMHSKIIQCIQYEVNFLFMMAVNQTFKNNFGVETLGKSVAQLHAWWYFKKPRDFPYERRTKSAAFIPFEKGDFYYHRAIVGGTPLNVLNLIEQYIKGITDDNTNKLVSTFESHLNKYFFINKPARVLSPEYNWDPRFKTPPEIKHIKIAWKP.

The Cytoplasmic segment spans residues 1–6 (MQYKKE). The chain crosses the membrane as a helical; Signal-anchor for type II membrane protein span at residues 7-26 (ALLLMLFAVLLALTQRFSYS). Over 27–319 (RTKDHLQKMY…IKHIKIAWKP (293 aa)) the chain is Lumenal. N-linked (GlcNAc...) asparagine glycosylation is found at Asn-89 and Asn-101. Residues 97–102 (FATGNF), 188–190 (AVN), and 210–213 (HAWW) each bind substrate. Catalysis depends on Glu-278, which acts as the Nucleophile.

The protein belongs to the glycosyltransferase 6 family. Requires Mn(2+) as cofactor.

The protein resides in the golgi apparatus. It is found in the golgi stack membrane. The enzyme catalyses a beta-D-galactosyl-(1-&gt;4)-N-acetyl-beta-D-glucosaminyl derivative + UDP-alpha-D-galactose = an alpha-D-galactosyl-(1-&gt;3)-beta-D-galactosyl-(1-&gt;4)-N-acetyl-beta-D-glucosaminyl derivative + UDP + H(+). Its pathway is protein modification; protein glycosylation. In terms of biological role, synthesizes the galactose-alpha(1,3)-galactose group by catalyzing the transfer of a galactose residue, with an alpha-1,3 linkage, on terminal lactosaminide (Gal-beta-1,4-GlcNAc-R) disaccharide borne by a glycoprotein or a glycolipid. This is N-acetyllactosaminide alpha-1,3-galactosyltransferase-like 1 (Ggta1l1) from Mus musculus (Mouse).